Reading from the N-terminus, the 5635-residue chain is Hemicentin-1 (5635 aa).

An N-terminal signal peptide occupies residues M1–A21. Residues T41–V216 enclose the VWFA domain. Residues N349 and N390 are each glycosylated (N-linked (GlcNAc...) asparagine). Ig-like C2-type domains lie at P431–S517, P520–T607, P612–R697, P702–D788, P793–T883, P890–V976, P981–T1067, P1072–N1166, P1171–T1255, P1262–K1354, P1358–D1447, P1452–T1541, P1546–D1634, P1638–K1724, P1733–T1821, P1826–H1914, P1919–Q2007, P2012–D2097, P2104–N2190, P2195–Q2285, P2290–S2379, P2384–F2470, P2478–S2564, P2571–K2662, P2666–Q2763, P2766–R2864, P2868–N2959, P2964–T3051, P3056–N3146, P3151–S3240, P3245–N3335, P3340–Q3429, P3434–S3516, P3527–R3615, P3620–T3708, P3713–D3797, P3804–T3892, P3897–H3983, P3988–Q4076, P4079–T4164, P4169–T4255, P4260–Y4344, P4348–T4435, and P4440–Q4527. C451 and C499 form a disulfide bridge. N-linked (GlcNAc...) asparagine glycans are attached at residues N528, N550, N573, and N620. A disulfide bridge connects residues C541 and C591. A disulfide bond links C633 and C681. N693 carries N-linked (GlcNAc...) asparagine glycosylation. An intrachain disulfide couples C723 to C772. Residue N809 is glycosylated (N-linked (GlcNAc...) asparagine). 2 cysteine pairs are disulfide-bonded: C814–C867 and C911–C960. A glycan (N-linked (GlcNAc...) asparagine) is linked at N970. 2 disulfide bridges follow: C1002/C1051 and C1101/C1150. Residue N1158 is glycosylated (N-linked (GlcNAc...) asparagine). C1192 and C1241 are disulfide-bonded. Residue N1272 is glycosylated (N-linked (GlcNAc...) asparagine). Cysteines 1288 and 1338 form a disulfide. N-linked (GlcNAc...) asparagine glycosylation is present at N1369. 2 cysteine pairs are disulfide-bonded: C1382/C1431 and C1475/C1525. A glycan (N-linked (GlcNAc...) asparagine) is linked at N1552. Disulfide bonds link C1569–C1618, C1663–C1712, C1756–C1805, and C1848–C1898. N1929 is a glycosylation site (N-linked (GlcNAc...) asparagine). Intrachain disulfides connect C1942/C1991 and C2033/C2083. N2112 and N2155 each carry an N-linked (GlcNAc...) asparagine glycan. 3 cysteine pairs are disulfide-bonded: C2125/C2174, C2218/C2269, and C2314/C2363. Residue N2395 is glycosylated (N-linked (GlcNAc...) asparagine). 3 cysteine pairs are disulfide-bonded: C2408–C2457, C2501–C2550, and C2597–C2646. N-linked (GlcNAc...) asparagine glycosylation occurs at N2689. 2 disulfides stabilise this stretch: C2696-C2745 and C2799-C2848. Residue N2887 is glycosylated (N-linked (GlcNAc...) asparagine). A disulfide bond links C2894 and C2943. N2973 is a glycosylation site (N-linked (GlcNAc...) asparagine). 6 disulfides stabilise this stretch: C2986/C3035, C3081/C3130, C3173/C3224, C3268/C3319, C3364/C3413, and C3457/C3506. N3221 and N3300 each carry an N-linked (GlcNAc...) asparagine glycan. N3530 carries an N-linked (GlcNAc...) asparagine glycan. 2 disulfide bridges follow: C3550–C3599 and C3643–C3692. N-linked (GlcNAc...) asparagine glycosylation is found at N3689 and N3727. The cysteines at positions 3734 and 3783 are disulfide-linked. N-linked (GlcNAc...) asparagine glycosylation occurs at N3812. 26 disulfide bridges follow: C3825/C3876, C3918/C3967, C4009/C4058, C4100/C4148, C4190/C4239, C4281/C4328, C4371/C4419, C4461/C4509, C4541/C4578, C4545/C4583, C4556/C4568, C4598/C4635, C4602/C4640, C4613/C4625, C4655/C4692, C4659/C4697, C4670/C4682, C4712/C4749, C4716/C4754, C4727/C4739, C4769/C4806, C4773/C4811, C4784/C4796, C4826/C4863, C4830/C4868, and C4841/C4853. An N-linked (GlcNAc...) asparagine glycan is attached at N4029. N-linked (GlcNAc...) asparagine glycosylation is found at N4401 and N4491. TSP type-1 domains are found at residues H4529 to P4584, D4586 to P4641, H4643 to P4698, H4700 to P4755, H4757 to P4812, and D4814 to P4869. N-linked (GlcNAc...) asparagine glycosylation is present at N4606. One can recognise a Nidogen G2 beta-barrel domain in the interval G4871–P5093. 2 N-linked (GlcNAc...) asparagine glycosylation sites follow: N4894 and N5040. In terms of domain architecture, EGF-like 1; calcium-binding spans D5107–Q5146. Cystine bridges form between C5111/C5121, C5117/C5130, and C5132/C5145. One can recognise an EGF-like 2; calcium-binding domain in the interval D5147 to Q5191. One can recognise an EGF-like 3; calcium-binding domain in the interval D5192–M5229. Intrachain disulfides connect C5196-C5206, C5202-C5215, and C5217-C5228. Residues D5230–I5271 enclose the EGF-like 4; calcium-binding domain. N5267 carries N-linked (GlcNAc...) asparagine glycosylation. One can recognise an EGF-like 5; calcium-binding domain in the interval D5272 to Q5307. 8 disulfides stabilise this stretch: C5276/C5289, C5283/C5298, C5319/C5330, C5326/C5339, C5341/C5354, C5436/C5446, C5442/C5455, and C5457/C5470. Residues D5315–A5355 form the EGF-like 6; calcium-binding domain. In terms of domain architecture, EGF-like 7; calcium-binding spans D5432 to Q5471. N5615 carries N-linked (GlcNAc...) asparagine glycosylation.

In terms of tissue distribution, expressed in hair follicles and in the dermis (at protein level). As to expression, expressed in skin fibroblasts and retinal pigment epithelium (RPE) cells.

Its subcellular location is the secreted. The protein localises to the extracellular space. It localises to the extracellular matrix. The protein resides in the basement membrane. It is found in the cytoplasm. Its subcellular location is the cell junction. The protein localises to the cleavage furrow. Involved in transforming growth factor beta-mediated rearrangement of the podocyte cytoskeleton which includes reduction of F-actin fibers and broadening, flattening and elongation of podocytes. Plays a role in basement membrane organization. May promote cleavage furrow maturation during cytokinesis in preimplantation embryos. May play a role in the architecture of adhesive and flexible epithelial cell junctions. May play a role during myocardial remodeling by imparting an effect on cardiac fibroblast migration. This Homo sapiens (Human) protein is Hemicentin-1 (HMCN1).